The chain runs to 374 residues: Methylthioribose-1-phosphate isomerase (374 aa).

Ser-2 bears the N-acetylserine mark. Asp-253 functions as the Proton donor in the catalytic mechanism.

The protein belongs to the eIF-2B alpha/beta/delta subunits family. MtnA subfamily.

It localises to the cytoplasm. The protein resides in the nucleus. The catalysed reaction is 5-(methylsulfanyl)-alpha-D-ribose 1-phosphate = 5-(methylsulfanyl)-D-ribulose 1-phosphate. The protein operates within amino-acid biosynthesis; L-methionine biosynthesis via salvage pathway; L-methionine from S-methyl-5-thio-alpha-D-ribose 1-phosphate: step 1/6. Catalyzes the interconversion of methylthioribose-1-phosphate (MTR-1-P) into methylthioribulose-1-phosphate (MTRu-1-P). The polypeptide is Methylthioribose-1-phosphate isomerase (Arabidopsis thaliana (Mouse-ear cress)).